Reading from the N-terminus, the 600-residue chain is Elongation factor 4 (600 aa).

The 183-residue stretch at 4–186 (KNVRNFCIIA…AIVNRIPPPK (183 aa)) folds into the tr-type G domain. Residues 16-21 (DHGKST) and 133-136 (NKID) contribute to the GTP site.

It belongs to the TRAFAC class translation factor GTPase superfamily. Classic translation factor GTPase family. LepA subfamily.

The protein resides in the cell inner membrane. The enzyme catalyses GTP + H2O = GDP + phosphate + H(+). In terms of biological role, required for accurate and efficient protein synthesis under certain stress conditions. May act as a fidelity factor of the translation reaction, by catalyzing a one-codon backward translocation of tRNAs on improperly translocated ribosomes. Back-translocation proceeds from a post-translocation (POST) complex to a pre-translocation (PRE) complex, thus giving elongation factor G a second chance to translocate the tRNAs correctly. Binds to ribosomes in a GTP-dependent manner. The protein is Elongation factor 4 of Aquifex aeolicus (strain VF5).